We begin with the raw amino-acid sequence, 526 residues long: MRMQAALVGWACTTLCLASCSSAFSHGASTVACDDMQPKHIQAQPQHQDSHHITIHTHRTSYAPGDKIPVTVRSSRDFMGFLLQARRVSDHQIAGTFVLIPPHSKLMTCFQEADAVTHSDKSLKRNLSFVWKAPAQPVGDIKFLLSVVQSYFVYWARIESSVVSQQTHSSAHSDDRMEPRLLMPNLHQRLGDVEGAAPAPRTPITLPQQHTHVFAVALPGAAEEDNLDPVPASIWVTKFPGDAETLSQPSSHTATEGSINQQPSGDSNPTLEPSLEVHRLERLVALKRVSSESFASSLSTHHRTQDDPSFDSLETCLSSDGGEQDKTKASNRTVTQPPLSTVQLTYPQCLWSSETFTGNGVRASNPIPVLQTSGTSGLPAAGDQSEASRASASFLPQSKHKELRAGKGNGEGGVGYPRQTNPRPDIGLEGAQAPLGIQLRTPQLGILLCLSATLGMALAAGLRYLHTQYCHQQTEVSFSEPASDAVARSNSGETVHVRKIGENSFVLVQAEYNWITPSVGSKKTVL.

A signal peptide spans 1–23; the sequence is MRMQAALVGWACTTLCLASCSSA. The region spanning 24-179 is the Reelin domain; that stretch reads FSHGASTVAC…SAHSDDRMEP (156 aa). Over 24 to 443 the chain is Extracellular; the sequence is FSHGASTVAC…PLGIQLRTPQ (420 aa). Disordered stretches follow at residues 242–272, 294–336, and 370–398; these read DAETLSQPSSHTATEGSINQQPSGDSNPTLE, FASS…TVTQ, and LQTSGTSGLPAAGDQSEASRASASFLPQS. Over residues 245–271 the composition is skewed to polar residues; that stretch reads TLSQPSSHTATEGSINQQPSGDSNPTL. The segment covering 385–396 has biased composition (polar residues); sequence SEASRASASFLP. A helical membrane pass occupies residues 444 to 462; sequence LGILLCLSATLGMALAAGL. Residues 463–526 are Cytoplasmic-facing; that stretch reads RYLHTQYCHQ…PSVGSKKTVL (64 aa).

The protein resides in the membrane. This Homo sapiens (Human) protein is Reelin domain-containing protein 1.